We begin with the raw amino-acid sequence, 78 residues long: Short neurotoxin SNTX6 (78 aa).

The N-terminal stretch at 1 to 21 (MKTLLLTFLVVTIVCLDLGYT) is a signal peptide. Disulfide bonds link cysteine 24/cysteine 40, cysteine 33/cysteine 58, cysteine 62/cysteine 70, and cysteine 71/cysteine 76.

This sequence belongs to the three-finger toxin family. Short-chain subfamily. In terms of tissue distribution, expressed by the venom gland.

Its subcellular location is the secreted. This three-finger toxin binds and inhibits the nicotinic acetylcholine receptor (nAChR). The chain is Short neurotoxin SNTX6 from Ophiophagus hannah (King cobra).